The primary structure comprises 974 residues: ATP-dependent RNA helicase DBP7 (974 aa).

Residues 1–135 (MDDNDDGLML…SSAASSSRKA (135 aa)) form a disordered region. Positions 13 to 24 (AAPAAGSASVSS) are enriched in low complexity. A compositionally biased stretch (basic residues) spans 25–48 (KRSKQTAKARFAQKRTAHQLRKQA). Low complexity-rich tracts occupy residues 67-85 (PASA…SPAA), 92-102 (ATSTSSAALSA), and 118-133 (TSRS…SSSR). Residues 200 to 230 (SDFASCGLDPLLVYHLASKMNIGSNPTAIQK) carry the Q motif motif. One can recognise a Helicase ATP-binding domain in the interval 236–477 (LLHPGLDRDI…GKTLVNPKII (242 aa)). 249–256 (AQTGSGKT) provides a ligand contact to ATP. The short motif at 381–384 (DEAD) is the DEAD box element. The Helicase C-terminal domain maps to 531 to 747 (LLRSYISRAR…TRKITPASIE (217 aa)). The segment at 836-887 (KSSAIGASSTPASSHETTNKKRMRIAPDTAESDSSSDSSDDAGSDYESHSNK) is disordered. Residues 840–851 (IGASSTPASSHE) are compositionally biased toward polar residues.

It belongs to the DEAD box helicase family. DDX31/DBP7 subfamily.

Its subcellular location is the nucleus. It localises to the nucleolus. It carries out the reaction ATP + H2O = ADP + phosphate + H(+). ATP-binding RNA helicase involved in the biogenesis of 60S ribosomal subunits and is required for the normal formation of 25S and 5.8S rRNAs. This Mycosarcoma maydis (Corn smut fungus) protein is ATP-dependent RNA helicase DBP7 (DBP7).